Consider the following 928-residue polypeptide: Protein ARABIDILLO 2 (928 aa).

Residues 3-8 (RRVRQR) carry the Nuclear localization signal motif. An F-box domain is found at 37–83 (YVNWTSLPYDTVFHLFTRLNYRDRASLASTCRTWRSLGASSFLWSSL). ARM repeat units lie at residues 147-186 (AARH…KLRV), 237-278 (TSNI…KSSQ), 303-341 (KGKV…DLIR), 370-409 (SQGL…TFIV), 419-458 (CGRA…NLSV), 460-499 (AKVA…NLSV), 501-543 (EEHK…NLAA), 545-585 (DKCS…NLAA), 591-630 (GNNA…NLAF), 632-674 (DKNR…GLSV), 676-715 (EANS…NLSF), 717-757 (PGNA…YMFD), and 824-864 (IPEA…QFTI).

This sequence belongs to the beta-catenin family. In terms of tissue distribution, expressed ubiquitously.

The protein resides in the nucleus. Functionally, promotes lateral root initiation and development, independently of auxin (IAA) and abscisis acid (ABA). This Arabidopsis thaliana (Mouse-ear cress) protein is Protein ARABIDILLO 2.